The primary structure comprises 914 residues: Isoleucine--tRNA ligase (914 aa).

A 'HIGH' region motif is present at residues 57–67 (PYANGQIHMGH). E554 contributes to the L-isoleucyl-5'-AMP binding site. The short motif at 595 to 599 (KMSKS) is the 'KMSKS' region element. An ATP-binding site is contributed by K598. The Zn(2+) site is built by C883, C886, C904, and C907.

Belongs to the class-I aminoacyl-tRNA synthetase family. IleS type 1 subfamily. In terms of assembly, monomer. Zn(2+) serves as cofactor.

The protein resides in the cytoplasm. It carries out the reaction tRNA(Ile) + L-isoleucine + ATP = L-isoleucyl-tRNA(Ile) + AMP + diphosphate. Catalyzes the attachment of isoleucine to tRNA(Ile). As IleRS can inadvertently accommodate and process structurally similar amino acids such as valine, to avoid such errors it has two additional distinct tRNA(Ile)-dependent editing activities. One activity is designated as 'pretransfer' editing and involves the hydrolysis of activated Val-AMP. The other activity is designated 'posttransfer' editing and involves deacylation of mischarged Val-tRNA(Ile). The chain is Isoleucine--tRNA ligase from Macrococcus caseolyticus (strain JCSC5402) (Macrococcoides caseolyticum).